The following is an 817-amino-acid chain: Protein Jade-3 (817 aa).

Positions 1-38 (MKRLRNLSSSDSSDNESPSTSFSSCFQHKGKGKCTADD) are disordered. Residues 8 to 24 (SSSDSSDNESPSTSFSS) are compositionally biased toward low complexity. The PHD-type 1 zinc-finger motif lies at 202–252 (DVICDVCRSPDSEEGNDMVFCDRCNICVHQACYGILKVPEGSWLCRTCVLG). The C2HC pre-PHD-type zinc finger occupies 254–288 (HPQCILCPKTGGAMKATRTGTKWAHVSCALWIPEV). A PHD-type 2 zinc finger spans residues 312-368 (LVCSLCKLKTGACIQCSVKSCITAFHVTCAFEHSLEMKTILDEGDEVKFKSYCLKHS). Disordered regions lie at residues 375-396 (ISEQEEPHKTHSDNRPTESERT), 665-689 (NGVLSSGDRTQRDSSSQTSPGQNSE), and 719-817 (LVRT…SVQR). Positions 379-396 (EEPHKTHSDNRPTESERT) are enriched in basic and acidic residues. The span at 667 to 689 (VLSSGDRTQRDSSSQTSPGQNSE) shows a compositional bias: polar residues. Over residues 722-743 (TTEDLRSSEKPQRRQSVKERLW) the composition is skewed to basic and acidic residues. The segment covering 747–758 (PADTQTSGTPYQ) has biased composition (polar residues). Positions 777–799 (DENKDHMLLRRNSRESPNRDSCR) are enriched in basic and acidic residues. Positions 801–810 (SRIRGKRKMT) are enriched in basic residues.

It belongs to the JADE family. In terms of assembly, component of the HBO1 complex.

Its function is as follows. Scaffold subunit of some HBO1 complexes, which have a histone H4 acetyltransferase activity. This Xenopus tropicalis (Western clawed frog) protein is Protein Jade-3 (jade3).